A 508-amino-acid polypeptide reads, in one-letter code: Photosystem II CP47 reaction center protein (508 aa).

6 consecutive transmembrane segments (helical) span residues 21–36, 101–115, 140–156, 203–218, 237–252, and 457–472; these read SVHI…WAGS, IVFS…IWHW, GIHL…FGAF, IAAG…FHLS, VLSS…AFVV, and SFAL…HGAR.

Belongs to the PsbB/PsbC family. PsbB subfamily. As to quaternary structure, PSII is composed of 1 copy each of membrane proteins PsbA, PsbB, PsbC, PsbD, PsbE, PsbF, PsbH, PsbI, PsbJ, PsbK, PsbL, PsbM, PsbT, PsbX, PsbY, PsbZ, Psb30/Ycf12, at least 3 peripheral proteins of the oxygen-evolving complex and a large number of cofactors. It forms dimeric complexes. The cofactor is Binds multiple chlorophylls. PSII binds additional chlorophylls, carotenoids and specific lipids..

The protein resides in the plastid. The protein localises to the chloroplast thylakoid membrane. In terms of biological role, one of the components of the core complex of photosystem II (PSII). It binds chlorophyll and helps catalyze the primary light-induced photochemical processes of PSII. PSII is a light-driven water:plastoquinone oxidoreductase, using light energy to abstract electrons from H(2)O, generating O(2) and a proton gradient subsequently used for ATP formation. This is Photosystem II CP47 reaction center protein from Gossypium barbadense (Sea Island cotton).